The primary structure comprises 170 residues: Peptide deformylase (170 aa).

Cys94 and His136 together coordinate Fe cation. Glu137 is an active-site residue. His140 is a Fe cation binding site.

Belongs to the polypeptide deformylase family. Requires Fe(2+) as cofactor.

The catalysed reaction is N-terminal N-formyl-L-methionyl-[peptide] + H2O = N-terminal L-methionyl-[peptide] + formate. Functionally, removes the formyl group from the N-terminal Met of newly synthesized proteins. Requires at least a dipeptide for an efficient rate of reaction. N-terminal L-methionine is a prerequisite for activity but the enzyme has broad specificity at other positions. This Agrobacterium fabrum (strain C58 / ATCC 33970) (Agrobacterium tumefaciens (strain C58)) protein is Peptide deformylase.